Consider the following 566-residue polypeptide: Rho GTPase-activating protein gacH (566 aa).

4 disordered regions span residues 1–56 (MSGV…SGAT), 65–84 (LLKQQQQPNHSITTNNNNNK), 128–168 (SEDE…SAHS), and 322–366 (KPQV…NSKN). Low complexity predominate over residues 14–35 (SSTTATTTGSSKSSLNISKSVS). Over residues 36-56 (PTGNKAVSPMSSPNSLQSGAT) the composition is skewed to polar residues. Residues 65-83 (LLKQQQQPNHSITTNNNNN) show a composition bias toward low complexity. Residues 130–141 (DEYEDDEDEDEN) show a composition bias toward acidic residues. Over residues 142–160 (NNSVNNNSNNNSNNNNNNN) the composition is skewed to low complexity. Over residues 327–337 (KSPQSSGSLST) the composition is skewed to polar residues. Residues 345 to 356 (SSSLQRSRSVSQ) are compositionally biased toward low complexity. In terms of domain architecture, Rho-GAP spans 369 to 564 (GSLDTILEKE…LLIENYNLFY (196 aa)).

The protein localises to the cytoplasm. In terms of biological role, rho GTPase-activating protein involved in the signal transduction pathway. The polypeptide is Rho GTPase-activating protein gacH (gacH) (Dictyostelium discoideum (Social amoeba)).